The sequence spans 216 residues: Large ribosomal subunit protein bL21 (216 aa).

The protein belongs to the bacterial ribosomal protein bL21 family. In terms of assembly, part of the 50S ribosomal subunit. Contacts protein L20.

This protein binds to 23S rRNA in the presence of protein L20. The sequence is that of Large ribosomal subunit protein bL21 from Roseobacter denitrificans (strain ATCC 33942 / OCh 114) (Erythrobacter sp. (strain OCh 114)).